We begin with the raw amino-acid sequence, 341 residues long: Hydrogenase expression/formation protein HupE (341 aa).

The protein belongs to the HypE family.

Functionally, may be involved in the maturation of the NifE hydrogenase. The chain is Hydrogenase expression/formation protein HupE (hupE) from Azotobacter chroococcum mcd 1.